The sequence spans 257 residues: 1-(5-phosphoribosyl)-5-[(5-phosphoribosylamino)methylideneamino] imidazole-4-carboxamide isomerase (257 aa).

Residue D8 is the Proton acceptor of the active site. D130 serves as the catalytic Proton donor.

This sequence belongs to the HisA/HisF family.

The protein localises to the cytoplasm. The enzyme catalyses 1-(5-phospho-beta-D-ribosyl)-5-[(5-phospho-beta-D-ribosylamino)methylideneamino]imidazole-4-carboxamide = 5-[(5-phospho-1-deoxy-D-ribulos-1-ylimino)methylamino]-1-(5-phospho-beta-D-ribosyl)imidazole-4-carboxamide. It functions in the pathway amino-acid biosynthesis; L-histidine biosynthesis; L-histidine from 5-phospho-alpha-D-ribose 1-diphosphate: step 4/9. This chain is 1-(5-phosphoribosyl)-5-[(5-phosphoribosylamino)methylideneamino] imidazole-4-carboxamide isomerase, found in Chlorobium chlorochromatii (strain CaD3).